Consider the following 339-residue polypeptide: Ketol-acid reductoisomerase (NADP(+)) (339 aa).

A KARI N-terminal Rossmann domain is found at 1–182 (MRVYYDRDAD…GGGRAGIIET (182 aa)). NADP(+)-binding positions include 24–27 (YGSQ), R48, S51, T53, and 83–86 (DELQ). H108 is a catalytic residue. G134 provides a ligand contact to NADP(+). In terms of domain architecture, KARI C-terminal knotted spans 183-328 (TFREECETDL…AKLRAMMPWI (146 aa)). Positions 191, 195, 227, and 231 each coordinate Mg(2+). S252 contributes to the substrate binding site.

This sequence belongs to the ketol-acid reductoisomerase family. The cofactor is Mg(2+).

It carries out the reaction (2R)-2,3-dihydroxy-3-methylbutanoate + NADP(+) = (2S)-2-acetolactate + NADPH + H(+). The enzyme catalyses (2R,3R)-2,3-dihydroxy-3-methylpentanoate + NADP(+) = (S)-2-ethyl-2-hydroxy-3-oxobutanoate + NADPH + H(+). It functions in the pathway amino-acid biosynthesis; L-isoleucine biosynthesis; L-isoleucine from 2-oxobutanoate: step 2/4. The protein operates within amino-acid biosynthesis; L-valine biosynthesis; L-valine from pyruvate: step 2/4. Functionally, involved in the biosynthesis of branched-chain amino acids (BCAA). Catalyzes an alkyl-migration followed by a ketol-acid reduction of (S)-2-acetolactate (S2AL) to yield (R)-2,3-dihydroxy-isovalerate. In the isomerase reaction, S2AL is rearranged via a Mg-dependent methyl migration to produce 3-hydroxy-3-methyl-2-ketobutyrate (HMKB). In the reductase reaction, this 2-ketoacid undergoes a metal-dependent reduction by NADPH to yield (R)-2,3-dihydroxy-isovalerate. The sequence is that of Ketol-acid reductoisomerase (NADP(+)) from Methylocella silvestris (strain DSM 15510 / CIP 108128 / LMG 27833 / NCIMB 13906 / BL2).